The following is a 100-amino-acid chain: MAPTAYYVALSGLLFAIGMIGVLTRRTAIMIFLSVELMLNAANLALVAFARAWGDLTAQTAVFIVMTLAAAEVAIGLAIIVAIFRKRETTNVDDLATLKG.

A run of 3 helical transmembrane segments spans residues 3–23, 29–49, and 63–83; these read PTAY…IGVL, IMIF…LVAF, and FIVM…IVAI.

This sequence belongs to the complex I subunit 4L family. As to quaternary structure, NDH-1 is composed of 15 different subunits. Subunits NuoA, H, J, K, L, M, N constitute the membrane sector of the complex.

Its subcellular location is the cell membrane. The enzyme catalyses a quinone + NADH + 5 H(+)(in) = a quinol + NAD(+) + 4 H(+)(out). Functionally, NDH-1 shuttles electrons from NADH, via FMN and iron-sulfur (Fe-S) centers, to quinones in the respiratory chain. The immediate electron acceptor for the enzyme in this species is believed to be a menaquinone. Couples the redox reaction to proton translocation (for every two electrons transferred, four hydrogen ions are translocated across the cytoplasmic membrane), and thus conserves the redox energy in a proton gradient. This Deinococcus geothermalis (strain DSM 11300 / CIP 105573 / AG-3a) protein is NADH-quinone oxidoreductase subunit K.